Reading from the N-terminus, the 525-residue chain is Ribosomal protein S6 kinase beta-1 (525 aa).

A disordered region spans residues 1–54 (MRRRRRRDGFYPAPDFRDREAEDMAGVFDIDLDQPEDAGSEDELEEGGQLNESM). The TOS motif signature appears at 28 to 32 (FDIDL). The segment covering 30–46 (IDLDQPEDAGSEDELEE) has biased composition (acidic residues). A Protein kinase domain is found at 91-352 (FELLRVLGKG…AGEVQAHPFF (262 aa)). ATP contacts are provided by residues 97 to 105 (LGKGGYGKV) and Lys-123. The active-site Proton acceptor is the Asp-218. Position 252 is a phosphothreonine; by PDPK1 (Thr-252). The 71-residue stretch at 353–423 (RHINWEELLA…VAPSVLESVK (71 aa)) folds into the AGC-kinase C-terminal domain. The tract at residues 380–399 (SQFDSKFTRQTPVDSPDDST) is disordered. Positions 381–399 (QFDSKFTRQTPVDSPDDST) are enriched in polar residues. At Ser-394 the chain carries Phosphoserine. The residue at position 412 (Thr-412) is a Phosphothreonine; by MTOR, NEK6 and NEK7. The tract at residues 424-525 (EKFSFEPKIR…KRPEHLRMNL (102 aa)) is autoinhibitory domain. Phosphoserine is present on residues Ser-434 and Ser-441. Thr-444 carries the phosphothreonine modification. Phosphoserine occurs at positions 447 and 452. An N6-acetyllysine modification is found at Lys-516.

It belongs to the protein kinase superfamily. AGC Ser/Thr protein kinase family. S6 kinase subfamily. In terms of assembly, interacts with PPP1R9A/neurabin-1. Interacts with RPTOR. Interacts with IRS1. Interacts with EIF3B and EIF3C. Interacts with TRAF4. Interacts with POLDIP3. Interacts (via N-terminus) with IER5. (Microbial infection) Interacts with Mumps virus phosphoprotein; this interaction may play a role in the viral replication and transcription. In terms of processing, phosphorylation at Thr-412 is regulated by mTORC1. The phosphorylation at this site is maintained by an agonist-dependent autophosphorylation mechanism. Activated by phosphorylation at Thr-252 by PDPK1. Dephosphorylation by PPP1CC at Thr-412 in mitochondrion. In terms of tissue distribution, widely expressed.

Its subcellular location is the synapse. The protein resides in the synaptosome. The protein localises to the mitochondrion outer membrane. It localises to the mitochondrion. It is found in the nucleus. Its subcellular location is the cytoplasm. It catalyses the reaction L-seryl-[protein] + ATP = O-phospho-L-seryl-[protein] + ADP + H(+). It carries out the reaction L-threonyl-[protein] + ATP = O-phospho-L-threonyl-[protein] + ADP + H(+). Activation requires multiple phosphorylation events on serine/threonine residues. Activation appears to be first mediated by phosphorylation of multiple sites in the autoinhibitory domain, which facilitates phosphorylation at Thr-412, disrupting the autoinhibitory mechanism and allowing phosphorylation of Thr-252 by PDPK1. The active conformation of the kinase is believed to be stabilized by a mechanism involving three conserved phosphorylation sites located in the kinase domain activation loop (Thr-252) and in the AGC-kinase C-terminal domain (Ser-394 in the middle of the tail/linker region and Thr-412 within a hydrophobic motif at its end). Activated by mTORC1; isoform Alpha I and isoform Alpha II are sensitive to rapamycin, which inhibits activating phosphorylation at Thr-412. Activated by PDPK1. Its function is as follows. Serine/threonine-protein kinase that acts downstream of mTOR signaling in response to growth factors and nutrients to promote cell proliferation, cell growth and cell cycle progression. Regulates protein synthesis through phosphorylation of EIF4B, RPS6 and EEF2K, and contributes to cell survival by repressing the pro-apoptotic function of BAD. Under conditions of nutrient depletion, the inactive form associates with the EIF3 translation initiation complex. Upon mitogenic stimulation, phosphorylation by the mechanistic target of rapamycin complex 1 (mTORC1) leads to dissociation from the EIF3 complex and activation. The active form then phosphorylates and activates several substrates in the pre-initiation complex, including the EIF2B complex and the cap-binding complex component EIF4B. Also controls translation initiation by phosphorylating a negative regulator of EIF4A, PDCD4, targeting it for ubiquitination and subsequent proteolysis. Promotes initiation of the pioneer round of protein synthesis by phosphorylating POLDIP3/SKAR. In response to IGF1, activates translation elongation by phosphorylating EEF2 kinase (EEF2K), which leads to its inhibition and thus activation of EEF2. Also plays a role in feedback regulation of mTORC2 by mTORC1 by phosphorylating MAPKAP1/SIN1, MTOR and RICTOR, resulting in the inhibition of mTORC2 and AKT1 signaling. Also involved in feedback regulation of mTORC1 and mTORC2 by phosphorylating DEPTOR. Mediates cell survival by phosphorylating the pro-apoptotic protein BAD and suppressing its pro-apoptotic function. Phosphorylates mitochondrial URI1 leading to dissociation of a URI1-PPP1CC complex. The free mitochondrial PPP1CC can then dephosphorylate RPS6KB1 at Thr-412, which is proposed to be a negative feedback mechanism for the RPS6KB1 anti-apoptotic function. Mediates TNF-alpha-induced insulin resistance by phosphorylating IRS1 at multiple serine residues, resulting in accelerated degradation of IRS1. In cells lacking functional TSC1-2 complex, constitutively phosphorylates and inhibits GSK3B. May be involved in cytoskeletal rearrangement through binding to neurabin. Phosphorylates and activates the pyrimidine biosynthesis enzyme CAD, downstream of MTOR. Following activation by mTORC1, phosphorylates EPRS and thereby plays a key role in fatty acid uptake by adipocytes and also most probably in interferon-gamma-induced translation inhibition. This chain is Ribosomal protein S6 kinase beta-1 (RPS6KB1), found in Homo sapiens (Human).